Reading from the N-terminus, the 327-residue chain is Undecaprenyl-phosphate 4-deoxy-4-formamido-L-arabinose transferase (327 aa).

The next 2 helical transmembrane spans lie at 233–253 and 268–288; these read ILSL…LLLI and VFTL…GMGL.

This sequence belongs to the glycosyltransferase 2 family.

The protein resides in the cell inner membrane. It catalyses the reaction UDP-4-deoxy-4-formamido-beta-L-arabinose + di-trans,octa-cis-undecaprenyl phosphate = 4-deoxy-4-formamido-alpha-L-arabinopyranosyl di-trans,octa-cis-undecaprenyl phosphate + UDP. The protein operates within glycolipid biosynthesis; 4-amino-4-deoxy-alpha-L-arabinose undecaprenyl phosphate biosynthesis; 4-amino-4-deoxy-alpha-L-arabinose undecaprenyl phosphate from UDP-4-deoxy-4-formamido-beta-L-arabinose and undecaprenyl phosphate: step 1/2. It functions in the pathway bacterial outer membrane biogenesis; lipopolysaccharide biosynthesis. Catalyzes the transfer of 4-deoxy-4-formamido-L-arabinose from UDP to undecaprenyl phosphate. The modified arabinose is attached to lipid A and is required for resistance to polymyxin and cationic antimicrobial peptides. This chain is Undecaprenyl-phosphate 4-deoxy-4-formamido-L-arabinose transferase, found in Pectobacterium carotovorum subsp. carotovorum (strain PC1).